The sequence spans 117 residues: MDCTWRILFLVAAATGTHAQVQLVQSGAEVKKPGASVKVSCKVSGYTLTELSMHWVRQAPGKGLEWMGGFDPEDGETIYAQKFQGRVTMTEDTSTDTAYMELSSLRSEDTAVYYCAT.

The first 19 residues, 1 to 19, serve as a signal peptide directing secretion; that stretch reads MDCTWRILFLVAAATGTHA. The segment at 20–44 is framework-1; sequence QVQLVQSGAEVKKPGASVKVSCKVS. One can recognise an Ig-like domain in the interval 20–117; the sequence is QVQLVQSGAE…EDTAVYYCAT (98 aa). An intrachain disulfide couples cysteine 41 to cysteine 115. The segment at 45–52 is complementarity-determining-1; sequence GYTLTELS. Residues 53-69 are framework-2; the sequence is MHWVRQAPGKGLEWMGG. The segment at 70–77 is complementarity-determining-2; it reads FDPEDGET. A framework-3 region spans residues 78 to 115; sequence IYAQKFQGRVTMTEDTSTDTAYMELSSLRSEDTAVYYC. Residues 116-117 form a complementarity-determining-3 region; sequence AT.

As to quaternary structure, immunoglobulins are composed of two identical heavy chains and two identical light chains; disulfide-linked.

It localises to the secreted. The protein localises to the cell membrane. Functionally, v region of the variable domain of immunoglobulin heavy chains that participates in the antigen recognition. Immunoglobulins, also known as antibodies, are membrane-bound or secreted glycoproteins produced by B lymphocytes. In the recognition phase of humoral immunity, the membrane-bound immunoglobulins serve as receptors which, upon binding of a specific antigen, trigger the clonal expansion and differentiation of B lymphocytes into immunoglobulins-secreting plasma cells. Secreted immunoglobulins mediate the effector phase of humoral immunity, which results in the elimination of bound antigens. The antigen binding site is formed by the variable domain of one heavy chain, together with that of its associated light chain. Thus, each immunoglobulin has two antigen binding sites with remarkable affinity for a particular antigen. The variable domains are assembled by a process called V-(D)-J rearrangement and can then be subjected to somatic hypermutations which, after exposure to antigen and selection, allow affinity maturation for a particular antigen. The polypeptide is Immunoglobulin heavy variable 1-24 (Homo sapiens (Human)).